Reading from the N-terminus, the 726-residue chain is Beta-glucosidase cel3A (726 aa).

An N-terminal signal peptide occupies residues 1–20 (MASRLVAGLQVLALAGTATA). N-linked (GlcNAc...) asparagine glycosylation is found at Asn-223 and Asn-592.

Belongs to the glycosyl hydrolase 3 family.

The protein resides in the secreted. It catalyses the reaction Hydrolysis of terminal, non-reducing beta-D-glucosyl residues with release of beta-D-glucose.. Its pathway is glycan metabolism; cellulose degradation. Beta-glucosidases are one of a number of cellulolytic enzymes involved in the degradation of cellulosic biomass. Catalyzes the last step releasing glucose from the inhibitory cellobiose. Has a broad substrate specificity but preferentially hydrolyzes highly polymerized 1,3- and 1,4-beta-glucans. The protein is Beta-glucosidase cel3A of Pyricularia oryzae (strain 70-15 / ATCC MYA-4617 / FGSC 8958) (Rice blast fungus).